Consider the following 74-residue polypeptide: Acyl carrier protein (74 aa).

In terms of domain architecture, Carrier spans 1–73 (MAVFEKVQEI…DLVAYVEEKT (73 aa)). An O-(pantetheine 4'-phosphoryl)serine modification is found at Ser-35.

This sequence belongs to the acyl carrier protein (ACP) family. 4'-phosphopantetheine is transferred from CoA to a specific serine of apo-ACP by AcpS. This modification is essential for activity because fatty acids are bound in thioester linkage to the sulfhydryl of the prosthetic group.

The protein localises to the cytoplasm. The protein operates within lipid metabolism; fatty acid biosynthesis. Carrier of the growing fatty acid chain in fatty acid biosynthesis. This chain is Acyl carrier protein, found in Streptococcus thermophilus (strain CNRZ 1066).